A 343-amino-acid chain; its full sequence is Leucine-rich repeat-containing protein 23 (343 aa).

Acidic residues predominate over residues 1-30; sequence MSDEDDLEDSEPDQDDSEKEEDEKETEEGE. The disordered stretch occupies residues 1–47; the sequence is MSDEDDLEDSEPDQDDSEKEEDEKETEEGEDYRKEGEEFPEEWLPTP. LRR repeat units lie at residues 92–113, 114–134, 135–155, 156–177, 180–200, 201–222, 223–244, and 246–267; these read HLRY…NYLT, HLLW…NELP, YLQI…ISHP, RLET…DPEK, SLHT…INLP, KLKN…EDLS, NLTT…SREM, and SLQY…AKLR. Residues 208–343 form an interaction with RSPH9 region; sequence AQNMLKKVEG…RDLEPEQSLI (136 aa). In terms of domain architecture, LRRCT spans 280-318; it reads NPCTDETSYRQEALVQMPYLERLDKEFYEEEERAEADVI. Residues 307 to 329 adopt a coiled-coil conformation; it reads YEEEERAEADVIRQRLKEEKEQE. The segment covering 318-337 has biased composition (basic and acidic residues); the sequence is IRQRLKEEKEQEPEPQRDLE. The interval 318–343 is disordered; the sequence is IRQRLKEEKEQEPEPQRDLEPEQSLI.

As to quaternary structure, component of the axonemal radial spoke complex. Interacts with RSPH3. Interacts with RSPH9. Expressed in spermatozoa.

The protein resides in the cell projection. Its subcellular location is the cilium. It is found in the flagellum. It localises to the cytoplasm. The protein localises to the cytoskeleton. The protein resides in the flagellum axoneme. In terms of biological role, essential for sperm motility and male fertility. Plays an important role in the proper assembly of the third radial spoke (RS3) head and the bridge structure between RS2 and RS3 in the sperm flagella. The sequence is that of Leucine-rich repeat-containing protein 23 (LRRC23) from Homo sapiens (Human).